We begin with the raw amino-acid sequence, 625 residues long: MNQLTNLSSAEISAQHEQDAKDLTRILPASKKVYIEGSRPDIQVPMREISLTDTPTGLGGEHNPPIMVYDTSGVYTDPNVQIDLNKGLPSVRQKWIEERNDTDVLSGLTSKFGQERLKDIRTADIRFAHIQNPRRAKAGKNVTQMHYAKQGIITPEMEYIAIRENQRQHEAVDMRQHPGQNFGAKNLKEITPEFVRQEVAEGRAIIPANINHPELEPMIIGRNFLVKINANIGNSALGSSIDEEVAKMTWATRWGADTIMDLSTGKNIHETREWIIRNSPVPIGTVPIYQALEKVDGVAENLTWEIFKDTLIEQAEQGVDYFTIHAGVLLRYVPLTANRLTGIVSRGGSIMAQWCLAHHEENFLYTHFDEICEIMKAYDVSFSLGDGLRPGCIQDANDEAQFSELKTLGELTHRAWERDVQVMIEGPGHVPMHMIKENMDLQLEVCKEAPFYTLGPLTTDIAPGYDHITSAIGAAMIGWYGTAMLCYVTPKEHLGLPNKKDVKDGIITYKIAAHAADLAKGHPGAQARDNALSKARFEFRWDDQFNLSLDPDTARSMHDETLPKEAHKSAHFCSMCGPKFCSMKITQNVRDYANNLTNSDSEVEEGLKAMKEVYQEQGQKLYHKV.

Substrate-binding positions include N231, M260, Y289, H325, 345–347, 386–389, and E425; these read SRG and DGLR. A Zn(2+)-binding site is contributed by H429. Y452 lines the substrate pocket. H493 is a binding site for Zn(2+). 3 residues coordinate [4Fe-4S] cluster: C573, C576, and C581.

The protein belongs to the ThiC family. As to quaternary structure, homodimer. It depends on [4Fe-4S] cluster as a cofactor.

It carries out the reaction 5-amino-1-(5-phospho-beta-D-ribosyl)imidazole + S-adenosyl-L-methionine = 4-amino-2-methyl-5-(phosphooxymethyl)pyrimidine + CO + 5'-deoxyadenosine + formate + L-methionine + 3 H(+). Its pathway is cofactor biosynthesis; thiamine diphosphate biosynthesis. Functionally, catalyzes the synthesis of the hydroxymethylpyrimidine phosphate (HMP-P) moiety of thiamine from aminoimidazole ribotide (AIR) in a radical S-adenosyl-L-methionine (SAM)-dependent reaction. This chain is Phosphomethylpyrimidine synthase, found in Acinetobacter baumannii (strain SDF).